A 298-amino-acid chain; its full sequence is MEDRYGREIRSFRLSITPKCNLKCFYCHKEGRNEEHGKLMSADEIVKIVKSSLEFGVRKIKISGGEPLLRTDLPKIIENIKDDQIKDISLTTNGILLEKYAQKLKDAGLDRVNVSLDTLDPVQYKKITAGGNIESVKKGIEKAIEVGLTPLKVNFLAMDCTVKQLPAIMDYCRKIGAILQIIEFIPMEPELKHHHIDVIPIEKEIAKKADQVFTRKFMQNRKKYVIDGLEVEFVRPMDNTEFCGHCTRIRLTYDGYLKPCLLRDDNLVDVANPVRNGEDIRKYFIKCIEEREPFCKAQ.

One can recognise a Radical SAM core domain in the interval 4-227 (RYGREIRSFR…MQNRKKYVID (224 aa)). Arg-13 contributes to the GTP binding site. 2 residues coordinate [4Fe-4S] cluster: Cys-20 and Cys-24. Tyr-26 is a binding site for S-adenosyl-L-methionine. Cys-27 is a binding site for [4Fe-4S] cluster. Residue Lys-61 coordinates GTP. Position 65 (Gly-65) interacts with S-adenosyl-L-methionine. Residue Thr-91 participates in GTP binding. Position 115 (Ser-115) interacts with S-adenosyl-L-methionine. A GTP-binding site is contributed by Lys-152. [4Fe-4S] cluster is bound by residues Cys-243 and Cys-246. Residue 248–250 (RIR) participates in GTP binding. Residue Cys-260 coordinates [4Fe-4S] cluster.

Belongs to the radical SAM superfamily. MoaA family. Requires [4Fe-4S] cluster as cofactor.

The catalysed reaction is GTP + AH2 + S-adenosyl-L-methionine = (8S)-3',8-cyclo-7,8-dihydroguanosine 5'-triphosphate + 5'-deoxyadenosine + L-methionine + A + H(+). It participates in cofactor biosynthesis; molybdopterin biosynthesis. In terms of biological role, catalyzes the cyclization of GTP to (8S)-3',8-cyclo-7,8-dihydroguanosine 5'-triphosphate. The chain is Probable GTP 3',8-cyclase from Methanococcus maripaludis (strain C6 / ATCC BAA-1332).